A 318-amino-acid chain; its full sequence is NADH-ubiquinone oxidoreductase chain 1 (318 aa).

8 consecutive transmembrane segments (helical) span residues 2–22, 70–90, 100–120, 136–156, 172–192, 222–242, 253–273, and 294–314; these read FMIN…FLTL, MFII…SPLP, LGVL…LWSG, VAQT…VLLM, LWLL…TLAE, LFFL…AILF, ELYT…FLWI, and LPLT…TASI.

This sequence belongs to the complex I subunit 1 family. In terms of assembly, core subunit of respiratory chain NADH dehydrogenase (Complex I) which is composed of 45 different subunits.

Its subcellular location is the mitochondrion inner membrane. It catalyses the reaction a ubiquinone + NADH + 5 H(+)(in) = a ubiquinol + NAD(+) + 4 H(+)(out). Its function is as follows. Core subunit of the mitochondrial membrane respiratory chain NADH dehydrogenase (Complex I) which catalyzes electron transfer from NADH through the respiratory chain, using ubiquinone as an electron acceptor. Essential for the catalytic activity and assembly of complex I. The polypeptide is NADH-ubiquinone oxidoreductase chain 1 (MT-ND1) (Balaenoptera physalus (Fin whale)).